The sequence spans 72 residues: Large ribosomal subunit protein bL31 (72 aa).

It belongs to the bacterial ribosomal protein bL31 family. Type A subfamily. Part of the 50S ribosomal subunit.

Its function is as follows. Binds the 23S rRNA. The sequence is that of Large ribosomal subunit protein bL31 from Deinococcus deserti (strain DSM 17065 / CIP 109153 / LMG 22923 / VCD115).